Here is a 162-residue protein sequence, read N- to C-terminus: Globin CTT-VI (162 aa).

A signal peptide spans methionine 1–alanine 15. Positions valine 17 to aspartate 161 constitute a Globin domain. Heme b-binding residues include histidine 75 and histidine 110.

The protein belongs to the globin family. As to quaternary structure, homodimer.

This is Globin CTT-VI (CTT-6) from Chironomus thummi thummi (Midge).